Here is a 270-residue protein sequence, read N- to C-terminus: Ribosomal RNA small subunit methyltransferase A (270 aa).

S-adenosyl-L-methionine is bound by residues N15, I17, G42, E64, D89, and N108.

This sequence belongs to the class I-like SAM-binding methyltransferase superfamily. rRNA adenine N(6)-methyltransferase family. RsmA subfamily.

The protein localises to the cytoplasm. It carries out the reaction adenosine(1518)/adenosine(1519) in 16S rRNA + 4 S-adenosyl-L-methionine = N(6)-dimethyladenosine(1518)/N(6)-dimethyladenosine(1519) in 16S rRNA + 4 S-adenosyl-L-homocysteine + 4 H(+). Its function is as follows. Specifically dimethylates two adjacent adenosines (A1518 and A1519) in the loop of a conserved hairpin near the 3'-end of 16S rRNA in the 30S particle. May play a critical role in biogenesis of 30S subunits. The polypeptide is Ribosomal RNA small subunit methyltransferase A (Anaplasma marginale (strain Florida)).